Reading from the N-terminus, the 234-residue chain is uncharacterized protein (234 aa).

Over residues 1–12 (MGSSSSSSLNNS) the composition is skewed to low complexity. The segment at 1–184 (MGSSSSSSLN…TPYLSGANSR (184 aa)) is disordered. 2 stretches are compositionally biased toward polar residues: residues 21–40 (TPES…SILS) and 52–64 (KSTS…NLTP). Residues 66-77 (KSRWSFSSSKKS) show a composition bias toward low complexity. Over residues 105–120 (GDFTPSLGNTPKSSFS) the composition is skewed to polar residues. Over residues 152-167 (LGELFRDSIREEREES) the composition is skewed to basic and acidic residues.

In terms of assembly, interacts with RLK902. As to expression, expressed in stems, rosette leaves and roots and weakly in inflorescences.

This is an uncharacterized protein from Arabidopsis thaliana (Mouse-ear cress).